The following is a 355-amino-acid chain: MSERFCIALDAMGGDHAPDMVVAGADIARERCPNVDYLFVGDEERIRPLLDKYPALAAVSTVRHTPDAVAGDAKPSVALRTGRNSSMRLAIDAVAAGDAACVVSAGNTGALMAMAKFVLKTLPGIDRPAIASFFPTLRGESVMLDLGANLECDADNLVQFAVMGTVFSRTVLGLLEPTVGLLNVGSEEQKGHGSIRQAASALRASALAKNFRGFVEGNDIAAGTVDVIVTDGFSGNIALKTAEGTAKLYAEFLKRTFKSSLLAKLGYLLAHGAFQKLRLRTDPRRYNGAMFLGLRGVCVKSHGGTDAVGFANAIGVASDLVVHGFNEKIRDELARLQAALEAAALSPESTEAAAV.

Belongs to the PlsX family. In terms of assembly, homodimer. Probably interacts with PlsY.

Its subcellular location is the cytoplasm. The enzyme catalyses a fatty acyl-[ACP] + phosphate = an acyl phosphate + holo-[ACP]. It participates in lipid metabolism; phospholipid metabolism. Functionally, catalyzes the reversible formation of acyl-phosphate (acyl-PO(4)) from acyl-[acyl-carrier-protein] (acyl-ACP). This enzyme utilizes acyl-ACP as fatty acyl donor, but not acyl-CoA. This chain is Phosphate acyltransferase, found in Rhodospirillum centenum (strain ATCC 51521 / SW).